Here is a 419-residue protein sequence, read N- to C-terminus: eIF5-mimic protein 1 (419 aa).

The disordered stretch occupies residues 1–22 (MNKHQKPVLTGQRFKTRKRDEK). Residue K117 is modified to N6-acetyllysine. Residues 248–415 (VQQSLGTRKE…QNAEEESESE (168 aa)) enclose the W2 domain. A phosphoserine mark is found at S412, S414, and S419.

The protein belongs to the BZW family. As to quaternary structure, interacts with EIF3E, EIF2S2 and EIF3C. In terms of tissue distribution, expressed at high levels in heart, and at lower levels in skeletal muscle, spleen and lung. Expressed at low levels in brain regions where nascent and immature neurons are present.

It is found in the cytoplasm. Translation initiation regulator which represses non-AUG initiated translation and repeat-associated non-AUG (RAN) initiated translation by acting as a competitive inhibitor of eukaryotic translation initiation factor 5 (EIF5) function. Increases the accuracy of translation initiation by impeding EIF5-dependent translation from non-AUG codons by competing with it for interaction with EIF2S2 within the 43S pre-initiation complex (PIC) in an EIF3C-binding dependent manner. This is eIF5-mimic protein 1 (Bzw2) from Rattus norvegicus (Rat).